The primary structure comprises 489 residues: DNA-directed RNA polymerase subunit beta' C-terminal section (489 aa).

Aspartate 208, aspartate 210, and aspartate 212 together coordinate Mg(2+).

This sequence belongs to the RNA polymerase beta' chain family. RpoC1 subfamily. In plastids the minimal PEP RNA polymerase catalytic core is composed of four subunits: alpha, beta, beta', and beta''. When a (nuclear-encoded) sigma factor is associated with the core the holoenzyme is formed, which can initiate transcription. Mg(2+) is required as a cofactor.

The protein localises to the plastid. It is found in the chloroplast. It catalyses the reaction RNA(n) + a ribonucleoside 5'-triphosphate = RNA(n+1) + diphosphate. In terms of biological role, DNA-dependent RNA polymerase catalyzes the transcription of DNA into RNA using the four ribonucleoside triphosphates as substrates. The chain is DNA-directed RNA polymerase subunit beta' C-terminal section (rpoC1B) from Chlamydomonas reinhardtii (Chlamydomonas smithii).